A 353-amino-acid chain; its full sequence is Forkhead box protein I3-A (353 aa).

The fork-head DNA-binding region spans Arg116 to Lys210. Residues Asp201–Cys255 are disordered. The Nuclear localization signal motif lies at Arg206–Lys212. The segment covering Ser213 to Lys222 has biased composition (basic and acidic residues). Residues Gly226–Gln252 are compositionally biased toward polar residues.

In terms of tissue distribution, expressed in ionocyte precursors.

It localises to the nucleus. Its function is as follows. Transcription factor required for epithelial cell differentiation. Involved in specification of skin ionocytes from epidermal precursors. The sequence is that of Forkhead box protein I3-A from Danio rerio (Zebrafish).